Reading from the N-terminus, the 320-residue chain is MATNVNEEQYLDLIRYVLANGHQKGDRTGTGTKSVFGYQMRFDLSKGFPILTTKKVPFGLIKSELLWFLRGDTNIRFLLQHKNHIWDEWAFKKWVESDEYQGPDMTDFGHRWLKDPEFKQVYLQEKKAFCQRILEDDDFAQKYGDLGLVYGSQWRKWKTSQGDTIDQIANVIQQIKTTPDSRRMIVSAWNPEDVPSMALPPCHTMFQFYVNDGKLSCQLYQRSADIFLGVPFNIASYALLTHMIAHQCGLEPGEFVHTLGDAHIYLNHLDQVKEQLTRTPHEAPKLILPAEPKPIDQYEMTDIKLEGYTHEPAIKAPVAV.

DUMP contacts are provided by residues Arg-27 and 182–183 (RR). Catalysis depends on Cys-202, which acts as the Nucleophile. Residues 222-225 (RSAD), Asn-233, and 263-265 (HIY) contribute to the dUMP site. (6R)-5,10-methylene-5,6,7,8-tetrahydrofolate is bound at residue Asp-225. Ala-319 is a (6R)-5,10-methylene-5,6,7,8-tetrahydrofolate binding site.

It belongs to the thymidylate synthase family. Bacterial-type ThyA subfamily. Homodimer.

It localises to the cytoplasm. It carries out the reaction dUMP + (6R)-5,10-methylene-5,6,7,8-tetrahydrofolate = 7,8-dihydrofolate + dTMP. Its pathway is pyrimidine metabolism; dTTP biosynthesis. In terms of biological role, catalyzes the reductive methylation of 2'-deoxyuridine-5'-monophosphate (dUMP) to 2'-deoxythymidine-5'-monophosphate (dTMP) while utilizing 5,10-methylenetetrahydrofolate (mTHF) as the methyl donor and reductant in the reaction, yielding dihydrofolate (DHF) as a by-product. This enzymatic reaction provides an intracellular de novo source of dTMP, an essential precursor for DNA biosynthesis. This is Thymidylate synthase from Limosilactobacillus reuteri (strain DSM 20016) (Lactobacillus reuteri).